Here is a 163-residue protein sequence, read N- to C-terminus: Nucleotide-binding protein CJJ81176_0398 (163 aa).

The protein belongs to the YajQ family.

Nucleotide-binding protein. In Campylobacter jejuni subsp. jejuni serotype O:23/36 (strain 81-176), this protein is Nucleotide-binding protein CJJ81176_0398.